A 710-amino-acid polypeptide reads, in one-letter code: Subtilisin-like protease SBT4.8 (710 aa).

Residues 1–23 form the signal peptide; that stretch reads MVKRASFCLLSCLIILFLSSVSA. The propeptide at 24 to 111 is activation peptide; that stretch reads IIYDPQDKQV…VFRSKNYKLQ (88 aa). The Inhibitor I9 domain occupies 33 to 110; the sequence is VYVVYMGSLP…SVFRSKNYKL (78 aa). The Peptidase S8 domain occupies 115–559; the sequence is SWDFMGMKEG…AGHVDPIAAI (445 aa). Catalysis depends on D143, which acts as the Charge relay system. N174 carries N-linked (GlcNAc...) asparagine glycosylation. The active-site Charge relay system is the H198. N221, N364, and N419 each carry an N-linked (GlcNAc...) asparagine glycan. In terms of domain architecture, PA spans 354–414; the sequence is KYPLEYGDYL…VLSQDDFDSL (61 aa). S498 serves as the catalytic Charge relay system. Residues N535, N568, N580, N618, and N636 are each glycosylated (N-linked (GlcNAc...) asparagine).

It belongs to the peptidase S8 family. In terms of processing, the C-terminal propeptide is autocleaved.

It localises to the secreted. In Arabidopsis thaliana (Mouse-ear cress), this protein is Subtilisin-like protease SBT4.8.